We begin with the raw amino-acid sequence, 364 residues long: Pre-small/secreted glycoprotein (364 aa).

Positions 1-32 (MGVTGILQLPRDRFKRTSFFLWVIILFQRTFS) are cleaved as a signal peptide. N40 carries an N-linked (GlcNAc...) asparagine; by host glycan. Intrachain disulfides connect C108-C135 and C121-C147. Residues N204, N228, N238, N257, and N268 are each glycosylated (N-linked (GlcNAc...) asparagine; by host).

Belongs to the filoviruses glycoprotein family. In terms of assembly, homodimer; disulfide-linked. The homodimers are linked by two disulfide bonds in a parallel orientation. As to quaternary structure, monomer. In terms of processing, this precursor is processed into mature sGP and delta-peptide by host furin or furin-like proteases. The cleavage site corresponds to the furin optimal cleavage sequence [KR]-X-[KR]-R. N-glycosylated. Post-translationally, O-glycosylated.

The protein resides in the secreted. Seems to possess an anti-inflammatory activity as it can reverse the barrier-decreasing effects of TNF alpha. Might therefore contribute to the lack of inflammatory reaction seen during infection in spite the of extensive necrosis and massive virus production. Does not seem to be involved in activation of primary macrophages. Does not seem to interact specifically with neutrophils. Its function is as follows. Viroporin that permeabilizes mammalian cell plasma membranes. It acts by altering permeation of ionic compounds and small molecules. This activity may lead to viral enterotoxic activity. The sequence is that of Pre-small/secreted glycoprotein (GP) from Zaire ebolavirus (strain Gabon-94) (ZEBOV).